A 112-amino-acid polypeptide reads, in one-letter code: Evasin P1095 (112 aa).

The signal sequence occupies residues 1 to 23 (MELNAFTILQIAVFIAVGYHANT). Intrachain disulfides connect Cys-48–Cys-66, Cys-52–Cys-68, and Cys-62–Cys-79. N-linked (GlcNAc...) asparagine glycosylation occurs at Asn-51. The tract at residues 89–112 (GDPNDDPKINEATPQTQIFEKKRK) is disordered.

The protein localises to the secreted. Its function is as follows. Salivary chemokine-binding protein which binds to host chemokine CXCL8. This chain is Evasin P1095, found in Ixodes ricinus (Common tick).